The primary structure comprises 406 residues: Angiopoietin-related protein 4 (406 aa).

The first 25 residues, 1-25 (MSGAPTAGAALMLCAATAVLLSAQG), serve as a signal peptide directing secretion. Positions 100–143 (EVLHSLQTQLKAQNSRIQQLFHKVAQQQRHLEKQHLRIQHLQSQ) form a coiled coil. Asn177 is a glycosylation site (N-linked (GlcNAc...) asparagine). A Fibrinogen C-terminal domain is found at 179–401 (SRLHRLPRDC…ATTMLIQPMA (223 aa)). Disulfide bonds link Cys188-Cys216 and Cys341-Cys354.

In terms of assembly, homooligomer; disulfide-linked via Cys residues in the N-terminal part of the protein. The homooligomer undergoes proteolytic processing to release the ANGPTL4 C-terminal chain, which circulates as a monomer. The homooligomer unprocessed form is able to interact with the extracellular matrix. N-glycosylated. Post-translationally, forms disulfide-linked dimers and tetramers. In terms of processing, cleaved into a smaller N-terminal chain and a larger chain that contains the fibrinogen C-terminal domain; both cleaved and uncleaved forms are detected in the extracellular space. The cleaved form is not present within the cell. In terms of tissue distribution, detected in blood plasma (at protein level). Detected in liver. Detected in white fat tissue and placenta. Expressed at high levels in the placenta, heart, liver, muscle, pancreas and lung but expressed poorly in the brain and kidney.

The protein resides in the secreted. Its subcellular location is the extracellular space. The protein localises to the extracellular matrix. Mediates inactivation of the lipoprotein lipase LPL, and thereby plays a role in the regulation of triglyceride clearance from the blood serum and in lipid metabolism. May also play a role in regulating glucose homeostasis and insulin sensitivity. Inhibits proliferation, migration, and tubule formation of endothelial cells and reduces vascular leakage. Upon heterologous expression, inhibits the adhesion of endothelial cell to the extracellular matrix (ECM), and inhibits the reorganization of the actin cytoskeleton, formation of actin stress fibers and focal adhesions in endothelial cells that have adhered to ANGPTL4-containing ECM (in vitro). Depending on context, may modulate tumor-related angiogenesis. In terms of biological role, mediates inactivation of the lipoprotein lipase LPL, and thereby plays an important role in the regulation of triglyceride clearance from the blood serum and in lipid metabolism. Has higher activity in LPL inactivation than the uncleaved protein. This Homo sapiens (Human) protein is Angiopoietin-related protein 4 (ANGPTL4).